A 456-amino-acid polypeptide reads, in one-letter code: Gamma-aminobutyric acid receptor subunit alpha-1 (456 aa).

The N-terminal stretch at 1-27 (MKKSPGLSDYLWAWTLFLSTLTGRSYG) is a signal peptide. The Extracellular portion of the chain corresponds to 28 to 253 (QPSLQDELKD…FHLKRKIGYF (226 aa)). An N-linked (GlcNAc...) asparagine glycan is attached at Asn-38. Arg-94 contacts 4-aminobutanoate. The N-linked (GlcNAc...) asparagine glycan is linked to Asn-138. A 4-aminobutanoate-binding site is contributed by Thr-157. A disulfide bond links Cys-166 and Cys-180. The helical transmembrane segment at 254 to 274 (VIQTYLPCIMTVILSQVSFWL) threads the bilayer. Over 275 to 279 (NRESV) the chain is Cytoplasmic. The chain crosses the membrane as a helical span at residues 280 to 301 (PARTVFGVTTVLTMTTLSISAR). Residues 302 to 311 (NSLPKVAYAT) are Extracellular-facing. A helical membrane pass occupies residues 312 to 333 (AMDWFIAVCYAFVFSALIEFAT). The Cytoplasmic segment spans residues 334-421 (VNYFTKRGYA…TFNSVSKIDR (88 aa)). A helical transmembrane segment spans residues 422-441 (LSRIAFPLLFGIFNLVYWAT). Residues 442–456 (YLNREPQLKAPTPHQ) are Extracellular-facing.

Belongs to the ligand-gated ion channel (TC 1.A.9) family. Gamma-aminobutyric acid receptor (TC 1.A.9.5) subfamily. GABRA1 sub-subfamily. In terms of assembly, heteropentamer, formed by a combination of alpha (GABRA1-6), beta (GABRB1-3), gamma (GABRG1-3), delta (GABRD), epsilon (GABRE), rho (GABRR1-3), pi (GABRP) and theta (GABRQ) subunits, each subunit exhibiting distinct physiological and pharmacological properties. Interacts with UBQLN1. Interacts with TRAK1. Interacts with KIF21B. Identified in a complex of 720 kDa composed of LHFPL4, NLGN2, GABRA1, GABRB2, GABRG2 and GABRB3. Interacts with LHFPL4. Interacts with NLGN2. Interacts with SHISA7; interaction leads to the regulation of GABA(A) receptor trafficking, channel deactivation kinetics and pharmacology. In terms of tissue distribution, cerebellar granule cells, Purkinje cells and stellate/basket cells.

The protein localises to the postsynaptic cell membrane. It is found in the cell membrane. Its subcellular location is the cytoplasmic vesicle membrane. It catalyses the reaction chloride(in) = chloride(out). Its activity is regulated as follows. Allosterically activated by benzodiazepines, the neuroanesthetic alphaxalone and pentobarbital. Inhibited by the antagonist bicuculline. Potentiated by histamine. In terms of biological role, alpha subunit of the heteropentameric ligand-gated chloride channel gated by gamma-aminobutyric acid (GABA), a major inhibitory neurotransmitter in the brain. GABA-gated chloride channels, also named GABA(A) receptors (GABAAR), consist of five subunits arranged around a central pore and contain GABA active binding site(s) located at the alpha and beta subunit interface(s). When activated by GABA, GABAARs selectively allow the flow of chloride anions across the cell membrane down their electrochemical gradient. Alpha-1/GABRA1-containing GABAARs are largely synaptic. Chloride influx into the postsynaptic neuron following GABAAR opening decreases the neuron ability to generate a new action potential, thereby reducing nerve transmission. GABAARs containing alpha-1 and beta-2 or -3 subunits exhibit synaptogenic activity; the gamma-2 subunit being necessary but not sufficient to induce rapid synaptic contacts formation. GABAARs function also as histamine receptor where histamine binds at the interface of two neighboring beta subunits and potentiates GABA response. GABAARs containing alpha, beta and epsilon subunits also permit spontaneous chloride channel activity while preserving the structural information required for GABA-gated openings. Alpha-1-mediated plasticity in the orbitofrontal cortex regulates context-dependent action selection. Together with rho subunits, may also control neuronal and glial GABAergic transmission in the cerebellum. This is Gamma-aminobutyric acid receptor subunit alpha-1 (GABRA1) from Bos taurus (Bovine).